Consider the following 98-residue polypeptide: Transcription elongation factor A protein-like 7 (98 aa).

Over residues 1–24 the composition is skewed to basic and acidic residues; it reads MQRSCNEKEGKPKCSEPKREEEHP. The segment at 1–31 is disordered; sequence MQRSCNEKEGKPKCSEPKREEEHPYGAFEGQ. A coiled-coil region spans residues 59–89; sequence GEEMTGEEEEMERCLEEIRSLRKKFRALHSN.

Belongs to the TFS-II family. TFA subfamily.

It localises to the nucleus. Its function is as follows. Plays a role in the negative regulation of NF-kappa-B signaling at the basal level by modulating transcriptional activity of NF-kappa-B on its target gene promoters. Associates with cyclin D1 promoter containing Myc E-box sequence and transcriptionally represses cyclin D1 expression. Regulates telomerase reverse transcriptase expression and telomerase activity in both ALT (alternative lengthening of telomeres)and telomerase-positive cell lines. This Rattus norvegicus (Rat) protein is Transcription elongation factor A protein-like 7 (Tceal7).